A 628-amino-acid polypeptide reads, in one-letter code: tRNA uridine 5-carboxymethylaminomethyl modification enzyme MnmG (628 aa).

13–18 lines the FAD pocket; sequence GAGHAG. 273–287 contributes to the NAD(+) binding site; it reads GPRYCPSIEDKIVRF.

This sequence belongs to the MnmG family. In terms of assembly, homodimer. Heterotetramer of two MnmE and two MnmG subunits. The cofactor is FAD.

Its subcellular location is the cytoplasm. Its function is as follows. NAD-binding protein involved in the addition of a carboxymethylaminomethyl (cmnm) group at the wobble position (U34) of certain tRNAs, forming tRNA-cmnm(5)s(2)U34. The sequence is that of tRNA uridine 5-carboxymethylaminomethyl modification enzyme MnmG from Buchnera aphidicola subsp. Acyrthosiphon pisum (strain APS) (Acyrthosiphon pisum symbiotic bacterium).